Consider the following 61-residue polypeptide: UPF0434 protein PFL_1779 (61 aa).

Belongs to the UPF0434 family.

The sequence is that of UPF0434 protein PFL_1779 from Pseudomonas fluorescens (strain ATCC BAA-477 / NRRL B-23932 / Pf-5).